The chain runs to 197 residues: NADH-quinone oxidoreductase subunit C (197 aa).

The protein belongs to the complex I 30 kDa subunit family. NDH-1 is composed of 14 different subunits. Subunits NuoB, C, D, E, F, and G constitute the peripheral sector of the complex.

Its subcellular location is the cell inner membrane. It catalyses the reaction a quinone + NADH + 5 H(+)(in) = a quinol + NAD(+) + 4 H(+)(out). Its function is as follows. NDH-1 shuttles electrons from NADH, via FMN and iron-sulfur (Fe-S) centers, to quinones in the respiratory chain. The immediate electron acceptor for the enzyme in this species is believed to be ubiquinone. Couples the redox reaction to proton translocation (for every two electrons transferred, four hydrogen ions are translocated across the cytoplasmic membrane), and thus conserves the redox energy in a proton gradient. This chain is NADH-quinone oxidoreductase subunit C, found in Neisseria meningitidis serogroup B (strain ATCC BAA-335 / MC58).